The chain runs to 113 residues: UPF0060 membrane protein Mmcs_2513 (113 aa).

4 helical membrane passes run Ala12–Val32, Gly37–Phe57, Ile66–Asp86, and Arg92–Pro112.

Belongs to the UPF0060 family.

The protein localises to the cell membrane. The polypeptide is UPF0060 membrane protein Mmcs_2513 (Mycobacterium sp. (strain MCS)).